The following is an 876-amino-acid chain: Leucine--tRNA ligase (876 aa).

The short motif at 42–52 is the 'HIGH' region element; sequence PYPSGKLHMGH. Positions 634-638 match the 'KMSKS' region motif; that stretch reads KMGKS. Residue Lys-637 coordinates ATP.

This sequence belongs to the class-I aminoacyl-tRNA synthetase family.

Its subcellular location is the cytoplasm. The enzyme catalyses tRNA(Leu) + L-leucine + ATP = L-leucyl-tRNA(Leu) + AMP + diphosphate. In Variovorax paradoxus (strain S110), this protein is Leucine--tRNA ligase.